Reading from the N-terminus, the 131-residue chain is MNTKITNIIEDLKSLTLLEAAELIKQIEETFDVDASITSQSQAIVMPTAVDNSNKNEIEEKTEFDIILEEVPAAKKIAILKVVRSITGLGLKEAKALVESAPKMIKDNTNKENSEEIKQQLEEAGAKVSIK.

Positions 106-125 (KDNTNKENSEEIKQQLEEAG) are enriched in basic and acidic residues. Residues 106 to 131 (KDNTNKENSEEIKQQLEEAGAKVSIK) form a disordered region.

The protein belongs to the bacterial ribosomal protein bL12 family. In terms of assembly, homodimer. Part of the ribosomal stalk of the 50S ribosomal subunit. Forms a multimeric L10(L12)X complex, where L10 forms an elongated spine to which 2 to 4 L12 dimers bind in a sequential fashion. Binds GTP-bound translation factors.

It localises to the plastid. The protein localises to the chloroplast. Functionally, forms part of the ribosomal stalk which helps the ribosome interact with GTP-bound translation factors. Is thus essential for accurate translation. The chain is Large ribosomal subunit protein bL12c from Gracilaria tenuistipitata var. liui (Red alga).